The chain runs to 797 residues: Protocadherin-3 (797 aa).

An N-terminal signal peptide occupies residues 1 to 30 (METALAKIPQQRQVFFLTILSLLWKSSSEA). Residues 31–691 (IRYSMPEETE…DNYDVLTLYL (661 aa)) are Extracellular-facing. Cadherin domains are found at residues 35-133 (MPEE…SPEF), 138-242 (MLLT…SPQF), 247-346 (YKVQ…APEL), 351-450 (LTVL…APAF), and 455-560 (YTMF…APFV). Asparagine 169, asparagine 276, and asparagine 417 each carry an N-linked (GlcNAc...) asparagine glycan. A glycan (N-linked (GlcNAc...) asparagine) is linked at asparagine 566. The 104-residue stretch at 567-670 (ASAPCTELLP…VVDGFSQPYL (104 aa)) folds into the Cadherin 6 domain. Residues 692-712 (VIALASVSSLFLLSVVLFVGV) form a helical membrane-spanning segment. Residues 713–797 (RLCRRAREAS…AVVHNSVGFY (85 aa)) lie on the Cytoplasmic side of the membrane.

Expressed in brain.

The protein resides in the cell membrane. In terms of biological role, potential calcium-dependent cell-adhesion protein. May be involved in the establishment and maintenance of specific neuronal connections in the brain. The protein is Protocadherin-3 (Pcdh3) of Rattus norvegicus (Rat).